Reading from the N-terminus, the 700-residue chain is Neoverrucotoxin subunit beta (700 aa).

The B30.2/SPRY domain occupies 506-700 (HMPGVETIKD…QKVNGQIKLL (195 aa)).

Belongs to the SNTX/VTX toxin family. In terms of assembly, heterodimer of alpha and beta subunits. In terms of processing, not glycosylated. Post-translationally, four intrachain disulfide linkages are present in the heterodimer. No interchain disulfide bound links the two subunits. Expressed by the venom gland.

The protein localises to the secreted. Functionally, has hemolytic and lethal activities. Its hemolytic activity is inhibited by anionic lipids, especially potently by cardiolipin. The chain is Neoverrucotoxin subunit beta from Synanceia verrucosa (Reef stonefish).